The primary structure comprises 318 residues: Biotin synthase (318 aa).

The Radical SAM core domain maps to 44–270 (LCGDAVNLCS…INPTANIRLA (227 aa)). [4Fe-4S] cluster-binding residues include cysteine 62, cysteine 66, and cysteine 69. [2Fe-2S] cluster contacts are provided by serine 106, cysteine 138, cysteine 198, and arginine 268.

It belongs to the radical SAM superfamily. Biotin synthase family. Homodimer. The cofactor is [4Fe-4S] cluster. [2Fe-2S] cluster serves as cofactor.

It carries out the reaction (4R,5S)-dethiobiotin + (sulfur carrier)-SH + 2 reduced [2Fe-2S]-[ferredoxin] + 2 S-adenosyl-L-methionine = (sulfur carrier)-H + biotin + 2 5'-deoxyadenosine + 2 L-methionine + 2 oxidized [2Fe-2S]-[ferredoxin]. It functions in the pathway cofactor biosynthesis; biotin biosynthesis; biotin from 7,8-diaminononanoate: step 2/2. In terms of biological role, catalyzes the conversion of dethiobiotin (DTB) to biotin by the insertion of a sulfur atom into dethiobiotin via a radical-based mechanism. In Alkaliphilus metalliredigens (strain QYMF), this protein is Biotin synthase.